A 189-amino-acid chain; its full sequence is Threonylcarbamoyl-AMP synthase (189 aa).

One can recognise a YrdC-like domain in the interval 7 to 189 (NFTVKGLTEQ…DAITGKIIRK (183 aa)).

Belongs to the SUA5 family. TsaC subfamily.

The protein resides in the cytoplasm. It carries out the reaction L-threonine + hydrogencarbonate + ATP = L-threonylcarbamoyladenylate + diphosphate + H2O. Required for the formation of a threonylcarbamoyl group on adenosine at position 37 (t(6)A37) in tRNAs that read codons beginning with adenine. Catalyzes the conversion of L-threonine, HCO(3)(-)/CO(2) and ATP to give threonylcarbamoyl-AMP (TC-AMP) as the acyladenylate intermediate, with the release of diphosphate. The protein is Threonylcarbamoyl-AMP synthase of Blochmanniella floridana.